A 344-amino-acid polypeptide reads, in one-letter code: Coproporphyrin III ferrochelatase (344 aa).

Serine 52 contacts Fe-coproporphyrin III. Residue cysteine 113 coordinates [2Fe-2S] cluster. Tyrosine 116 provides a ligand contact to Fe-coproporphyrin III. Positions 172 and 255 each coordinate Fe(2+). The [2Fe-2S] cluster site is built by cysteine 316, cysteine 325, and cysteine 330.

Belongs to the ferrochelatase family. It depends on [2Fe-2S] cluster as a cofactor.

The protein localises to the cytoplasm. The catalysed reaction is Fe-coproporphyrin III + 2 H(+) = coproporphyrin III + Fe(2+). It participates in porphyrin-containing compound metabolism; protoheme biosynthesis. Involved in coproporphyrin-dependent heme b biosynthesis. Catalyzes the insertion of ferrous iron into coproporphyrin III to form Fe-coproporphyrin III. The protein is Coproporphyrin III ferrochelatase of Mycobacterium bovis (strain ATCC BAA-935 / AF2122/97).